Consider the following 132-residue polypeptide: Ribosome-binding factor A (132 aa).

Residues 113 to 132 form a disordered region; that stretch reads EANSTRAKDDDEADTPAKDD.

It belongs to the RbfA family. As to quaternary structure, monomer. Binds 30S ribosomal subunits, but not 50S ribosomal subunits or 70S ribosomes.

It localises to the cytoplasm. Its function is as follows. One of several proteins that assist in the late maturation steps of the functional core of the 30S ribosomal subunit. Associates with free 30S ribosomal subunits (but not with 30S subunits that are part of 70S ribosomes or polysomes). Required for efficient processing of 16S rRNA. May interact with the 5'-terminal helix region of 16S rRNA. This is Ribosome-binding factor A from Burkholderia cenocepacia (strain HI2424).